The primary structure comprises 101 residues: NAD(P)H-quinone oxidoreductase subunit 4L, chloroplastic (101 aa).

A run of 3 helical transmembrane segments spans residues 2–22 (MLEH…YGLI), 27–46 (MVRA…MNLI), and 61–81 (IFSI…PAIV).

It belongs to the complex I subunit 4L family. As to quaternary structure, NDH is composed of at least 16 different subunits, 5 of which are encoded in the nucleus.

It is found in the plastid. The protein resides in the chloroplast thylakoid membrane. It catalyses the reaction a plastoquinone + NADH + (n+1) H(+)(in) = a plastoquinol + NAD(+) + n H(+)(out). It carries out the reaction a plastoquinone + NADPH + (n+1) H(+)(in) = a plastoquinol + NADP(+) + n H(+)(out). In terms of biological role, NDH shuttles electrons from NAD(P)H:plastoquinone, via FMN and iron-sulfur (Fe-S) centers, to quinones in the photosynthetic chain and possibly in a chloroplast respiratory chain. The immediate electron acceptor for the enzyme in this species is believed to be plastoquinone. Couples the redox reaction to proton translocation, and thus conserves the redox energy in a proton gradient. The polypeptide is NAD(P)H-quinone oxidoreductase subunit 4L, chloroplastic (Drimys granadensis).